The chain runs to 184 residues: Photosystem I assembly protein Ycf4 (184 aa).

2 helical membrane-spanning segments follow: residues 22-42 (FCWA…GTSS) and 57-77 (ILFF…LFIS).

This sequence belongs to the Ycf4 family.

Its subcellular location is the plastid. The protein localises to the chloroplast thylakoid membrane. Functionally, seems to be required for the assembly of the photosystem I complex. The chain is Photosystem I assembly protein Ycf4 from Panax ginseng (Korean ginseng).